We begin with the raw amino-acid sequence, 349 residues long: Protein O-mannose kinase (349 aa).

The Cytoplasmic segment spans residues 1–19 (MGQQHGARNGLTHRELPRG). A helical; Signal-anchor for type II membrane protein transmembrane segment spans residues 20–42 (MGLLLAMALMNVVLYVCLDHLFI). Topologically, residues 43-349 (SPGRATEDPR…TVMSQTKEML (307 aa)) are lumenal. Residues N66, N164, and N219 are each glycosylated (N-linked (GlcNAc...) asparagine). The Protein kinase domain maps to 80-349 (VRQLKLVGEG…TVMSQTKEML (270 aa)).

It belongs to the protein kinase superfamily. Ser/Thr protein kinase family. STKL subfamily.

The protein localises to the endoplasmic reticulum membrane. It carries out the reaction 3-O-[beta-D-GalNAc-(1-&gt;3)-beta-D-GlcNAc-(1-&gt;4)-alpha-D-Man]-L-Thr-[protein] + ATP = 3-O-[beta-D-GalNAc-(1-&gt;3)-beta-D-GlcNAc-(1-&gt;4)-(O-6-P-alpha-D-Man)]-Thr-[protein] + ADP + H(+). Its function is as follows. Protein O-mannose kinase that specifically mediates phosphorylation at the 6-position of an O-mannose of the trisaccharide (N-acetylgalactosamine (GalNAc)-beta-1,3-N-acetylglucosamine (GlcNAc)-beta-1,4-mannose) to generate phosphorylated O-mannosyl trisaccharide (N-acetylgalactosamine-beta-1,3-N-acetylglucosamine-beta-1,4-(phosphate-6-)mannose). Phosphorylated O-mannosyl trisaccharide is a carbohydrate structure present in alpha-dystroglycan (DAG1), which is required for binding laminin G-like domain-containing extracellular proteins with high affinity. Only shows kinase activity when the GalNAc-beta-3-GlcNAc-beta-terminus is linked to the 4-position of O-mannose, suggesting that this disaccharide serves as the substrate recognition motif. The chain is Protein O-mannose kinase (Pomk) from Rattus norvegicus (Rat).